A 132-amino-acid chain; its full sequence is Small ribosomal subunit protein uS8 (132 aa).

This sequence belongs to the universal ribosomal protein uS8 family. As to quaternary structure, part of the 30S ribosomal subunit. Contacts proteins S5 and S12.

Its function is as follows. One of the primary rRNA binding proteins, it binds directly to 16S rRNA central domain where it helps coordinate assembly of the platform of the 30S subunit. This Bifidobacterium adolescentis (strain ATCC 15703 / DSM 20083 / NCTC 11814 / E194a) protein is Small ribosomal subunit protein uS8.